Consider the following 599-residue polypeptide: Sulfite reductase [NADPH] flavoprotein alpha-component (599 aa).

One can recognise a Flavodoxin-like domain in the interval 64–202 (VTLISASQTG…AASEWRARVV (139 aa)). FMN-binding positions include 70–75 (SQTGNA), 117–120 (STQG), and 153–162 (LGDTSYEFFC). Residues 234–448 (DAPLIATLSV…IEHNDNFRLP (215 aa)) form the FAD-binding FR-type domain. Residues threonine 322, alanine 356, 386–389 (RLYS), 404–406 (TVG), tyrosine 410, and 419–422 (GGAS) contribute to the FAD site. Residues 519-520 (SR), 525-529 (KIYVQ), and aspartate 561 contribute to the NADP(+) site. Position 599 (tyrosine 599) interacts with FAD.

This sequence belongs to the NADPH-dependent sulphite reductase flavoprotein subunit CysJ family. The protein in the N-terminal section; belongs to the flavodoxin family. It in the C-terminal section; belongs to the flavoprotein pyridine nucleotide cytochrome reductase family. As to quaternary structure, alpha(8)-beta(8). The alpha component is a flavoprotein, the beta component is a hemoprotein. FAD serves as cofactor. Requires FMN as cofactor.

It catalyses the reaction hydrogen sulfide + 3 NADP(+) + 3 H2O = sulfite + 3 NADPH + 4 H(+). It functions in the pathway sulfur metabolism; hydrogen sulfide biosynthesis; hydrogen sulfide from sulfite (NADPH route): step 1/1. In terms of biological role, component of the sulfite reductase complex that catalyzes the 6-electron reduction of sulfite to sulfide. This is one of several activities required for the biosynthesis of L-cysteine from sulfate. The flavoprotein component catalyzes the electron flow from NADPH -&gt; FAD -&gt; FMN to the hemoprotein component. This is Sulfite reductase [NADPH] flavoprotein alpha-component from Salmonella typhimurium (strain LT2 / SGSC1412 / ATCC 700720).